A 342-amino-acid chain; its full sequence is Dihydroorotase (342 aa).

2 residues coordinate Zn(2+): His-13 and His-15. Substrate contacts are provided by residues 15-17 (HLR) and Asn-41. Zn(2+) is bound by residues Lys-98, His-135, and His-173. At Lys-98 the chain carries N6-carboxylysine. His-135 contributes to the substrate binding site. Residue Leu-218 coordinates substrate. Asp-246 contributes to the Zn(2+) binding site. Asp-246 is a catalytic residue. 2 residues coordinate substrate: His-250 and Ala-262.

Belongs to the metallo-dependent hydrolases superfamily. DHOase family. Class II DHOase subfamily. In terms of assembly, homodimer. Requires Zn(2+) as cofactor.

The enzyme catalyses (S)-dihydroorotate + H2O = N-carbamoyl-L-aspartate + H(+). It functions in the pathway pyrimidine metabolism; UMP biosynthesis via de novo pathway; (S)-dihydroorotate from bicarbonate: step 3/3. In terms of biological role, catalyzes the reversible cyclization of carbamoyl aspartate to dihydroorotate. The protein is Dihydroorotase of Vibrio parahaemolyticus serotype O3:K6 (strain RIMD 2210633).